We begin with the raw amino-acid sequence, 166 residues long: Urease accessory protein UreE (166 aa).

The segment at 133-154 (QPEHGAYGGGHHHSRHGDEDFN) is disordered.

This sequence belongs to the UreE family.

It is found in the cytoplasm. Functionally, involved in urease metallocenter assembly. Binds nickel. Probably functions as a nickel donor during metallocenter assembly. This chain is Urease accessory protein UreE, found in Pseudomonas fluorescens (strain SBW25).